The sequence spans 275 residues: Release factor glutamine methyltransferase (275 aa).

S-adenosyl-L-methionine contacts are provided by residues 117–121, Asp140, Trp168, and Asn182; that span reads GTGSG. 182 to 185 is a binding site for substrate; sequence NPPY.

This sequence belongs to the protein N5-glutamine methyltransferase family. PrmC subfamily.

It catalyses the reaction L-glutaminyl-[peptide chain release factor] + S-adenosyl-L-methionine = N(5)-methyl-L-glutaminyl-[peptide chain release factor] + S-adenosyl-L-homocysteine + H(+). Its function is as follows. Methylates the class 1 translation termination release factors RF1/PrfA and RF2/PrfB on the glutamine residue of the universally conserved GGQ motif. The protein is Release factor glutamine methyltransferase of Buchnera aphidicola subsp. Schizaphis graminum (strain Sg).